Here is a 1711-residue protein sequence, read N- to C-terminus: Hybrid PKS-NRPS synthetase TAS1 (1711 aa).

Residues 43-397 (APLSKMQRAL…RNGLNSEHRV (355 aa)) are condensation (C) domain. The interval 506–907 (QQQATLRPEQ…TVLLYGRINN (402 aa)) is adenylation (A) domain. Residues 1043-1119 (LEWAAAKARI…SQVGLVQSRR (77 aa)) form the Carrier 1 domain. Serine 1079 is modified (O-(pantetheine 4'-phosphoryl)serine). Residues 1114 to 1127 (LVQSRRGSSGSPRT) show a composition bias toward polar residues. The interval 1114-1159 (LVQSRRGSSGSPRTVRSHARPQRKAKTPPRQARPETPESDYDQLPD) is disordered. The span at 1128–1140 (VRSHARPQRKAKT) shows a compositional bias: basic residues. The Carrier 2 domain maps to 1159–1236 (DLRDDVQQSI…AQVELLGRFT (78 aa)). Serine 1195 carries the post-translational modification O-(pantetheine 4'-phosphoryl)serine. In terms of domain architecture, Ketosynthase family 3 (KS3) spans 1266–1683 (REQYAIVGMS…GSTAHVVLSA (418 aa)). Active-site for beta-ketoacyl synthase activity residues include cysteine 1429, histidine 1565, and asparagine 1608.

The protein in the N-terminal section; belongs to the NRP synthetase family. Requires pantetheine 4'-phosphate as cofactor.

It catalyses the reaction acetoacetyl-CoA + L-isoleucine + ATP = tenuazonic acid + AMP + diphosphate + CoA + 2 H(+). In terms of biological role, hybrid PKS-NRPS synthetase that mediates the biosynthesis of the toxin tenuazonic acid (TeA), an inhibitor of protein biosynthesis on ribosomes by suppressing the release of new protein. TAS1 alone is sufficient for TeA synthesis via the condensation of isoleucine (Ile) with acetoacetyl-CoA by the N-terminal NRPS module and subsequent cyclization conducted by the C-terminal KS domain. In Botryobasidium botryosum (strain FD-172 SS1), this protein is Hybrid PKS-NRPS synthetase TAS1.